The primary structure comprises 79 residues: DNA-directed RNA polymerase subunit omega (79 aa).

The protein belongs to the RNA polymerase subunit omega family. In terms of assembly, the RNAP catalytic core consists of 2 alpha, 1 beta, 1 beta' and 1 omega subunit. When a sigma factor is associated with the core the holoenzyme is formed, which can initiate transcription.

The catalysed reaction is RNA(n) + a ribonucleoside 5'-triphosphate = RNA(n+1) + diphosphate. Its function is as follows. Promotes RNA polymerase assembly. Latches the N- and C-terminal regions of the beta' subunit thereby facilitating its interaction with the beta and alpha subunits. The chain is DNA-directed RNA polymerase subunit omega from Bdellovibrio bacteriovorus (strain ATCC 15356 / DSM 50701 / NCIMB 9529 / HD100).